A 744-amino-acid polypeptide reads, in one-letter code: Cullin-3 (744 aa).

The Cullin neddylation domain occupies 677–736; sequence MELSAIIVRIMKTEGKLSHQQLLERTTKRTQSRLSLTPSILKRSIQLLIEKEYIQRNADD. A Glycyl lysine isopeptide (Lys-Gly) (interchain with G-Cter in NEDD8) cross-link involves residue Lys-688.

Belongs to the cullin family. Component of a ubiquitin-protein ligase complex consisting of the cullin CUL3, the linker protein ELC1, the substrate receptor ELA1, and the RING protein HRT1. Post-translationally, neddylated; enhancing the ubiquitin-ligase activity.

Its pathway is protein modification; protein ubiquitination. As part of the CRL3 E3 ubiquitin ligase complex; polyubiquitylates monoubiquitylated RNA polymerase II subunit RPO21 to trigger its proteolysis; plays a role in global genomic repair. The protein is Cullin-3 (CUL3) of Saccharomyces cerevisiae (strain ATCC 204508 / S288c) (Baker's yeast).